We begin with the raw amino-acid sequence, 321 residues long: Ribosomal RNA small subunit methyltransferase H (321 aa).

S-adenosyl-L-methionine contacts are provided by residues 33–35 (AGH), Asp58, Phe85, Asp111, and Gln118.

The protein belongs to the methyltransferase superfamily. RsmH family.

Its subcellular location is the cytoplasm. The enzyme catalyses cytidine(1402) in 16S rRNA + S-adenosyl-L-methionine = N(4)-methylcytidine(1402) in 16S rRNA + S-adenosyl-L-homocysteine + H(+). In terms of biological role, specifically methylates the N4 position of cytidine in position 1402 (C1402) of 16S rRNA. The chain is Ribosomal RNA small subunit methyltransferase H from Chloroherpeton thalassium (strain ATCC 35110 / GB-78).